Consider the following 234-residue polypeptide: Adenosine 5'-phosphosulfate reductase (234 aa).

4 residues coordinate [4Fe-4S] cluster: cysteine 120, cysteine 121, cysteine 203, and cysteine 206. The active-site Nucleophile; cysteine thiosulfonate intermediate is the cysteine 229.

Belongs to the PAPS reductase family. CysH subfamily. It depends on [4Fe-4S] cluster as a cofactor.

Its subcellular location is the cytoplasm. The enzyme catalyses [thioredoxin]-disulfide + sulfite + AMP + 2 H(+) = adenosine 5'-phosphosulfate + [thioredoxin]-dithiol. The protein operates within sulfur metabolism; hydrogen sulfide biosynthesis; sulfite from sulfate. Functionally, catalyzes the formation of sulfite from adenosine 5'-phosphosulfate (APS) using thioredoxin as an electron donor. This is Adenosine 5'-phosphosulfate reductase from Bacillus thuringiensis subsp. konkukian (strain 97-27).